The following is a 187-amino-acid chain: GTP cyclohydrolase 1 (187 aa).

Residues Cys-76, His-79, and Cys-148 each coordinate Zn(2+).

It belongs to the GTP cyclohydrolase I family. As to quaternary structure, toroid-shaped homodecamer, composed of two pentamers of five dimers.

The enzyme catalyses GTP + H2O = 7,8-dihydroneopterin 3'-triphosphate + formate + H(+). It functions in the pathway cofactor biosynthesis; 7,8-dihydroneopterin triphosphate biosynthesis; 7,8-dihydroneopterin triphosphate from GTP: step 1/1. This chain is GTP cyclohydrolase 1, found in Streptococcus suis (strain 98HAH33).